The chain runs to 460 residues: UDP-N-acetylmuramate--L-alanine ligase (460 aa).

Position 112–118 (112–118 (GTHGKTT)) interacts with ATP.

The protein belongs to the MurCDEF family.

The protein localises to the cytoplasm. The catalysed reaction is UDP-N-acetyl-alpha-D-muramate + L-alanine + ATP = UDP-N-acetyl-alpha-D-muramoyl-L-alanine + ADP + phosphate + H(+). The protein operates within cell wall biogenesis; peptidoglycan biosynthesis. Its function is as follows. Cell wall formation. This chain is UDP-N-acetylmuramate--L-alanine ligase, found in Pelobacter propionicus (strain DSM 2379 / NBRC 103807 / OttBd1).